Here is a 257-residue protein sequence, read N- to C-terminus: MLILISPAKTLDYQSPLATERYTQPELLDHSQQLIREARKLSAPQIGKLMSISDKLADLNATRFHDWQPDFTPKNARQAILAFKGDVYTGLQAEEFSEADFDFAQQHLRMLSGLYGVLRPLDLMQPYRLEMGIRLENAKGKDLYQFWGDIITEKLNDALKAQGDNIVINLASDEYYRSVKPKKLNAEIIKPVFLDEKKGKFKVISFYAKKARGLMSRYIIENRLTKPEQLTAFNSEGYFFDGDASEKGELVFKRHEQ.

This sequence belongs to the UPF0246 family.

In Enterobacter sp. (strain 638), this protein is UPF0246 protein Ent638_0568.